The sequence spans 1075 residues: DNA-directed RNA polymerase subunit beta (1075 aa).

This sequence belongs to the RNA polymerase beta chain family. In terms of assembly, in plastids the minimal PEP RNA polymerase catalytic core is composed of four subunits: alpha, beta, beta', and beta''. When a (nuclear-encoded) sigma factor is associated with the core the holoenzyme is formed, which can initiate transcription.

It is found in the plastid. The protein resides in the chloroplast. The catalysed reaction is RNA(n) + a ribonucleoside 5'-triphosphate = RNA(n+1) + diphosphate. DNA-dependent RNA polymerase catalyzes the transcription of DNA into RNA using the four ribonucleoside triphosphates as substrates. This Sorghum bicolor (Sorghum) protein is DNA-directed RNA polymerase subunit beta.